Here is a 311-residue protein sequence, read N- to C-terminus: 2-dehydro-3-deoxygluconokinase (311 aa).

Residues 34 to 35 (GS), 106 to 108 (YYR), and R166 contribute to the substrate site. Residues 164–166 (NIR), 224–229 (KLGPKG), 253–256 (GAGD), and S283 contribute to the ATP site. Substrate-binding residues include G253 and D256. The active-site Proton acceptor is the D256. D292 is a binding site for substrate.

This sequence belongs to the carbohydrate kinase PfkB family. In terms of assembly, homotetramer. The cofactor is a divalent metal cation.

It carries out the reaction 2-dehydro-3-deoxy-D-gluconate + ATP = 2-dehydro-3-deoxy-6-phospho-D-gluconate + ADP + H(+). It participates in carbohydrate acid metabolism; 2-dehydro-3-deoxy-D-gluconate degradation; D-glyceraldehyde 3-phosphate and pyruvate from 2-dehydro-3-deoxy-D-gluconate: step 1/2. In terms of biological role, involved in the degradation of glucose via the semi-phosphorylative Entner-Doudoroff pathway. Catalyzes the phosphorylation of 2-keto-3-deoxygluconate (KDG) to produce 2-keto-3-deoxy-6-phosphogluconate (KDPG). Can also use GTP, but not ADP or AMP, as a phosphoryl donor and 2-keto-D-gluconate (KG) as a phosphoryl acceptor. This Sulfurisphaera tokodaii (strain DSM 16993 / JCM 10545 / NBRC 100140 / 7) (Sulfolobus tokodaii) protein is 2-dehydro-3-deoxygluconokinase.